Here is a 224-residue protein sequence, read N- to C-terminus: Zinc finger C4H2 domain-containing protein (224 aa).

Positions 11–104 (LESIKEIRNK…RRLHDEYKPL (94 aa)) form a coiled coil. A C4H2-type zinc finger spans residues 189–206 (CLSCHQQIHRNAPICPLC).

Expressed in fetal tissues, including in brain, intestine, lung, kidney and muscle. Isoform 1 is expressed in numerous fetal brain regions. Isoform 3 is highly expressed in numerous fetal brain regions and spinal cord.

It localises to the cytoplasm. The protein resides in the nucleus. The protein localises to the postsynaptic cell membrane. Plays a role in interneurons differentiation. Involved in neuronal development and in neuromuscular junction formation. The protein is Zinc finger C4H2 domain-containing protein (ZC4H2) of Homo sapiens (Human).